Consider the following 588-residue polypeptide: Aspartate--tRNA ligase (588 aa).

E177 provides a ligand contact to L-aspartate. The aspartate stretch occupies residues Q201 to K204. R223 contacts L-aspartate. ATP contacts are provided by residues R223 to E225 and Q232. Residue H451 coordinates L-aspartate. An ATP-binding site is contributed by E485. An L-aspartate-binding site is contributed by R492. An ATP-binding site is contributed by G537–R540.

Belongs to the class-II aminoacyl-tRNA synthetase family. Type 1 subfamily. In terms of assembly, homodimer.

It localises to the cytoplasm. It catalyses the reaction tRNA(Asp) + L-aspartate + ATP = L-aspartyl-tRNA(Asp) + AMP + diphosphate. Its function is as follows. Catalyzes the attachment of L-aspartate to tRNA(Asp) in a two-step reaction: L-aspartate is first activated by ATP to form Asp-AMP and then transferred to the acceptor end of tRNA(Asp). The chain is Aspartate--tRNA ligase from Staphylococcus aureus (strain MRSA252).